The chain runs to 342 residues: MIRVLVIDDSLFIRTVVQDMLSDDPDIQIVGVASDGLEALDKIRELKPDLITLDIEMPRLDGLSMLERKKEIDRFPKTLVLSSLTSEGAEMTKRAIALGADDFMLKPRGIKNIREIGGELKHKIKNICTIAYITAKPVLKDSNARNVVLIGSSAGGPPMLDTIVSKLPSDLNAAVIITQHMPKGGFTAALAARLNRISPLQIRETENGDVLKNGTVLVSRAGFHTIISSVLDKGGSQSGKIILTDSPPVHNVKPAVDKTFISAAQVFGNHCVTAILSGMGNDGGEGTEAIKKAGGVTIVCREEDCLVYGMARSALSRNCVDHVLSLQAIPEKIVETIRAMNG.

The Response regulatory domain maps to R3 to K121. 4-aspartylphosphate is present on D54. Residues D141 to M340 form the CheB-type methylesterase domain. Residues S153, H180, and D282 contribute to the active site.

Belongs to the CheB family. Phosphorylated by CheA. Phosphorylation of the N-terminal regulatory domain activates the methylesterase activity.

Its subcellular location is the cytoplasm. The catalysed reaction is [protein]-L-glutamate 5-O-methyl ester + H2O = L-glutamyl-[protein] + methanol + H(+). The enzyme catalyses L-glutaminyl-[protein] + H2O = L-glutamyl-[protein] + NH4(+). In terms of biological role, involved in chemotaxis. Part of a chemotaxis signal transduction system that modulates chemotaxis in response to various stimuli. Catalyzes the demethylation of specific methylglutamate residues introduced into the chemoreceptors (methyl-accepting chemotaxis proteins or MCP) by CheR. Also mediates the irreversible deamidation of specific glutamine residues to glutamic acid. In Methanospirillum hungatei JF-1 (strain ATCC 27890 / DSM 864 / NBRC 100397 / JF-1), this protein is Protein-glutamate methylesterase/protein-glutamine glutaminase 1.